Here is a 93-residue protein sequence, read N- to C-terminus: Small ribosomal subunit protein uS19 (93 aa).

This sequence belongs to the universal ribosomal protein uS19 family.

Functionally, protein S19 forms a complex with S13 that binds strongly to the 16S ribosomal RNA. The protein is Small ribosomal subunit protein uS19 of Mycobacteroides abscessus (strain ATCC 19977 / DSM 44196 / CCUG 20993 / CIP 104536 / JCM 13569 / NCTC 13031 / TMC 1543 / L948) (Mycobacterium abscessus).